The primary structure comprises 118 residues: Ribonuclease P protein component (118 aa).

The protein belongs to the RnpA family. In terms of assembly, consists of a catalytic RNA component (M1 or rnpB) and a protein subunit.

It carries out the reaction Endonucleolytic cleavage of RNA, removing 5'-extranucleotides from tRNA precursor.. In terms of biological role, RNaseP catalyzes the removal of the 5'-leader sequence from pre-tRNA to produce the mature 5'-terminus. It can also cleave other RNA substrates such as 4.5S RNA. The protein component plays an auxiliary but essential role in vivo by binding to the 5'-leader sequence and broadening the substrate specificity of the ribozyme. The chain is Ribonuclease P protein component from Rickettsia typhi (strain ATCC VR-144 / Wilmington).